The sequence spans 252 residues: Isoprenyl transferase (252 aa).

D28 is a catalytic residue. Mg(2+) is bound at residue D28. Substrate is bound by residues 29-32 (GNGR), W33, R41, H45, and 73-75 (STE). Catalysis depends on N76, which acts as the Proton acceptor. Residues W77, R79, R200, and 206-208 (RLS) contribute to the substrate site. E219 is a Mg(2+) binding site.

The protein belongs to the UPP synthase family. Homodimer. Mg(2+) is required as a cofactor.

In terms of biological role, catalyzes the condensation of isopentenyl diphosphate (IPP) with allylic pyrophosphates generating different type of terpenoids. The chain is Isoprenyl transferase from Streptococcus pneumoniae serotype 4 (strain ATCC BAA-334 / TIGR4).